Reading from the N-terminus, the 407-residue chain is Serine/threonine transporter SstT (407 aa).

9 consecutive transmembrane segments (helical) span residues 11–31, 43–63, 82–102, 141–161, 192–212, 216–236, 298–318, 339–359, and 363–383; these read IIHGSLVLQIIVGIALAVILA, FLGDFFVGALKAIAPILVFVL, IISLYLIGTFAAALTAVLLSF, ALMTGNYIGILAWGIGLGIAL, LGIFGLVAGTVAATGFDALAG, LLMVLVGAMLIMALVVNPLIV, MGGAAITITVLTLAAAHTLGV, ASGVAGGSLLLIPLACSLFGI, and IAMQVVAVGFIIGVVQDSAET.

This sequence belongs to the dicarboxylate/amino acid:cation symporter (DAACS) (TC 2.A.23) family.

The protein localises to the cell inner membrane. It carries out the reaction L-serine(in) + Na(+)(in) = L-serine(out) + Na(+)(out). The catalysed reaction is L-threonine(in) + Na(+)(in) = L-threonine(out) + Na(+)(out). Functionally, involved in the import of serine and threonine into the cell, with the concomitant import of sodium (symport system). In Shewanella denitrificans (strain OS217 / ATCC BAA-1090 / DSM 15013), this protein is Serine/threonine transporter SstT.